Reading from the N-terminus, the 450-residue chain is Salicylate synthase (450 aa).

Glu252 functions as the Proton donor in the catalytic mechanism. Gly270–Thr271 serves as a coordination point for substrate. Glu297 contributes to the Mg(2+) binding site. Residues Tyr385, Arg405, and Gly419 to Gly421 each bind substrate. The Mg(2+) site is built by Glu431 and Glu434. Lys438 provides a ligand contact to substrate.

The protein belongs to the anthranilate synthase component I family. Salicylate synthase subfamily. In terms of assembly, monomer. It depends on Mg(2+) as a cofactor.

It catalyses the reaction chorismate = isochorismate. The enzyme catalyses isochorismate = salicylate + pyruvate. It carries out the reaction chorismate = prephenate. The protein operates within siderophore biosynthesis; mycobactin biosynthesis. Functionally, involved in the incorporation of salicylate into the virulence-conferring salicylate-based siderophore mycobactin. Catalyzes the initial conversion of chorismate to yield the intermediate isochorismate (isochorismate synthase activity), and the subsequent elimination of the enolpyruvyl side chain in a lyase reaction to give salicylate (isochorismate pyruvate-lyase activity). In the absence of magnesium, MbtI displays a chorismate mutase activity and converts chorismate to prephenate. In Mycobacterium bovis (strain ATCC BAA-935 / AF2122/97), this protein is Salicylate synthase (mbtI).